Reading from the N-terminus, the 185-residue chain is Ribosome-recycling factor (185 aa).

The protein belongs to the RRF family.

It is found in the cytoplasm. In terms of biological role, responsible for the release of ribosomes from messenger RNA at the termination of protein biosynthesis. May increase the efficiency of translation by recycling ribosomes from one round of translation to another. The sequence is that of Ribosome-recycling factor from Novosphingobium aromaticivorans (strain ATCC 700278 / DSM 12444 / CCUG 56034 / CIP 105152 / NBRC 16084 / F199).